The sequence spans 330 residues: Heat-inducible transcription repressor HrcA (330 aa).

Belongs to the HrcA family.

Its function is as follows. Negative regulator of class I heat shock genes (grpE-dnaK-dnaJ and groELS operons). Prevents heat-shock induction of these operons. This is Heat-inducible transcription repressor HrcA from Synechococcus sp. (strain RCC307).